The primary structure comprises 332 residues: NADH-quinone oxidoreductase subunit H (332 aa).

Transmembrane regions (helical) follow at residues 4–24, 44–64, 78–98, 120–140, 165–185, 194–214, 255–275, 279–299, and 312–332; these read FAFF…IFAS, IGPD…MIKL, FIFA…LAAI, VALL…FLGG, VGAL…LVDI, FSWL…ALFI, IAGA…FWII, IMMI…RAAF, and YLIL…AVLL.

Belongs to the complex I subunit 1 family. In terms of assembly, NDH-1 is composed of 14 different subunits. Subunits NuoA, H, J, K, L, M, N constitute the membrane sector of the complex.

It is found in the cell inner membrane. The enzyme catalyses a quinone + NADH + 5 H(+)(in) = a quinol + NAD(+) + 4 H(+)(out). NDH-1 shuttles electrons from NADH, via FMN and iron-sulfur (Fe-S) centers, to quinones in the respiratory chain. The immediate electron acceptor for the enzyme in this species is believed to be ubiquinone. Couples the redox reaction to proton translocation (for every two electrons transferred, four hydrogen ions are translocated across the cytoplasmic membrane), and thus conserves the redox energy in a proton gradient. This subunit may bind ubiquinone. This is NADH-quinone oxidoreductase subunit H from Campylobacter jejuni subsp. doylei (strain ATCC BAA-1458 / RM4099 / 269.97).